The chain runs to 398 residues: Acetyl-CoA acetyltransferase (398 aa).

Ser-2 is modified (N-acetylserine). The Acyl-thioester intermediate role is filled by Cys-91. Tyr-186 and Lys-231 together coordinate CoA. Residue Tyr-186 coordinates K(+). K(+)-binding residues include Ala-248, Ala-249, and Ala-251. Residue Ser-252 coordinates CoA. K(+) is bound at residue Val-350. Catalysis depends on proton acceptor residues His-354 and Cys-384.

This sequence belongs to the thiolase-like superfamily. Thiolase family. In terms of assembly, homotetramer.

The protein localises to the cytoplasm. The protein resides in the cytosol. It carries out the reaction 2 acetyl-CoA = acetoacetyl-CoA + CoA. Its pathway is metabolic intermediate biosynthesis; (R)-mevalonate biosynthesis; (R)-mevalonate from acetyl-CoA: step 1/3. Functionally, acetyl-CoA acetyltransferase; part of the first module of ergosterol biosynthesis pathway that includes the early steps of the pathway, conserved across all eukaryotes, and which results in the formation of mevalonate from acetyl-coenzyme A (acetyl-CoA). ERG10 catalyzes the formation of acetoacetyl-CoA from acetyl-CoA. The first module starts with the action of the cytosolic acetyl-CoA acetyltransferase ERG10 that catalyzes the formation of acetoacetyl-CoA. The hydroxymethylglutaryl-CoA synthase ERG13 then condenses acetyl-CoA with acetoacetyl-CoA to form HMG-CoA. The rate-limiting step of the early module is the reduction to mevalonate by the 3-hydroxy-3-methylglutaryl-coenzyme A (HMG-CoA) reductases HMG1 and HMG2 which are derived from a single ancestral HMGR gene by gene duplication. The protein is Acetyl-CoA acetyltransferase of Saccharomyces cerevisiae (strain ATCC 204508 / S288c) (Baker's yeast).